We begin with the raw amino-acid sequence, 430 residues long: Tol-Pal system protein TolB (430 aa).

The first 21 residues, 1-21 (MKQAFRVALSVLMLFVAVAHA), serve as a signal peptide directing secretion.

Belongs to the TolB family. The Tol-Pal system is composed of five core proteins: the inner membrane proteins TolA, TolQ and TolR, the periplasmic protein TolB and the outer membrane protein Pal. They form a network linking the inner and outer membranes and the peptidoglycan layer.

The protein localises to the periplasm. Functionally, part of the Tol-Pal system, which plays a role in outer membrane invagination during cell division and is important for maintaining outer membrane integrity. TolB occupies a key intermediary position in the Tol-Pal system because it communicates directly with both membrane-embedded components, Pal in the outer membrane and TolA in the inner membrane. This is Tol-Pal system protein TolB from Erwinia tasmaniensis (strain DSM 17950 / CFBP 7177 / CIP 109463 / NCPPB 4357 / Et1/99).